Consider the following 557-residue polypeptide: Potassium-transporting ATPase potassium-binding subunit (557 aa).

A run of 10 helical transmembrane segments spans residues 6 to 26 (IQLL…GLGL), 59 to 79 (ALSL…ILFF), 127 to 147 (AGLT…LLAL), 172 to 192 (LYVL…FGVV), 247 to 267 (ISNF…VFLY), 278 to 298 (WAIF…VWTF), 363 to 383 (IVFG…LLTV), 410 to 430 (ILGI…SVSV), 475 to 495 (VMIA…VLVI), and 520 to 540 (FYIL…FPVL).

It belongs to the KdpA family. The system is composed of three essential subunits: KdpA, KdpB and KdpC.

The protein localises to the cell inner membrane. Functionally, part of the high-affinity ATP-driven potassium transport (or Kdp) system, which catalyzes the hydrolysis of ATP coupled with the electrogenic transport of potassium into the cytoplasm. This subunit binds the periplasmic potassium ions and delivers the ions to the membrane domain of KdpB through an intramembrane tunnel. The polypeptide is Potassium-transporting ATPase potassium-binding subunit (Leptospira interrogans serogroup Icterohaemorrhagiae serovar copenhageni (strain Fiocruz L1-130)).